Here is a 210-residue protein sequence, read N- to C-terminus: MSTLHKVKAYFGMAPMEDYDDEYYDDRSPTHGYGRSRFEEGYGRYEGRDYSDLRGDPTGYLPLGYRGGYGDEHRFRPREFDRPDLSRPRLGSWLRNSTRGALAMDPRRMAMLFDEGSPLSKITTLRPKDYSEARTIGERFRDGTPVIIDLVSMDNADAKRLVDFAAGLAFALRGSFDKVATKVFLLSPADVDVSPEERRRIAETGFYAYQ.

The protein belongs to the SepF family. As to quaternary structure, homodimer. Interacts with FtsZ.

The protein resides in the cytoplasm. Its function is as follows. Cell division protein that is part of the divisome complex and is recruited early to the Z-ring. Probably stimulates Z-ring formation, perhaps through the cross-linking of FtsZ protofilaments. Its function overlaps with FtsA. The chain is Cell division protein SepF from Mycobacterium leprae (strain Br4923).